The chain runs to 348 residues: MENLVAGSTLPPLFADEDGSKEGSDVTVTGLAHSESSFTGGTSQPVNNPDLVEDLSQVQQLQNESTNTAENTEQKPEEEQQRTKRGGWAKGRKRKKPLRDSNAPKSPLTGYVRFMNERREQLRAKRPEVPFPEITRMLGNEWSKLPPEEKRRYLDEADRDKERYMRELEQYQKTEAYKVFSRKAQDRQKGKLHRQDGARQPVHDHEKEADTKERSVFDIPIFTEEFLNHSKAREAELRQLRKSNMEFEERNAALQKHVESMRTAVEKLEVDVIQERSRNTVLQQHLETLRQALTTSFAGVPLPGSGETPTMETIDSYMNRLHGIIMANPQENENLIATVRDVVNRLER.

Disordered stretches follow at residues 1 to 114 (MENL…YVRF) and 181 to 213 (SRKA…DTKE). Polar residues-rich tracts occupy residues 34–47 (SESS…QPVN) and 56–71 (SQVQ…TAEN). The span at 72-82 (TEQKPEEEQQR) shows a compositional bias: basic and acidic residues. The span at 83 to 97 (TKRGGWAKGRKRKKP) shows a compositional bias: basic residues. Positions 104–172 (PKSPLTGYVR…RYMRELEQYQ (69 aa)) form a DNA-binding region, HMG box. The span at 183–213 (KAQDRQKGKLHRQDGARQPVHDHEKEADTKE) shows a compositional bias: basic and acidic residues. Residues 230 to 274 (SKAREAELRQLRKSNMEFEERNAALQKHVESMRTAVEKLEVDVIQ) adopt a coiled-coil conformation.

It is found in the nucleus. Its function is as follows. Plays a role in neuronal differentiation. The polypeptide is High mobility group protein 20A (HMG20A) (Gallus gallus (Chicken)).